Here is a 323-residue protein sequence, read N- to C-terminus: Transcription factor JunD (323 aa).

Disordered stretches follow at residues 138 to 173 and 197 to 221; these read QNQL…APGL and PFAA…QIVP. Positions 141–167 are enriched in gly residues; the sequence is LGGGGGPNGGAAAAGGGGGGGGGGGGE. The span at 198 to 212 shows a compositional bias: pro residues; the sequence is FAAPPPRLPPPPPPP. The interval 242 to 269 is basic motif; sequence RIKAERKRLRNRIAASKCRKRKLERISR. A bZIP domain is found at 242 to 305; the sequence is RIKAERKRLR…AQLKQKVLSH (64 aa). A leucine-zipper region spans residues 270 to 298; sequence LEEKVKSLKSQNTELASTASLLREQVAQL.

This sequence belongs to the bZIP family. Jun subfamily. Binds DNA as a dimer.

It is found in the nucleus. The chain is Transcription factor JunD (JUND) from Gallus gallus (Chicken).